Here is a 382-residue protein sequence, read N- to C-terminus: D-galactonate dehydratase (382 aa).

Asp-183 is a binding site for Mg(2+). The Proton donor role is filled by His-185. Mg(2+)-binding residues include Glu-209 and Glu-235. The active-site Proton acceptor is the His-285.

Belongs to the mandelate racemase/muconate lactonizing enzyme family. GalD subfamily. It depends on Mg(2+) as a cofactor.

It carries out the reaction D-galactonate = 2-dehydro-3-deoxy-D-galactonate + H2O. The protein operates within carbohydrate acid metabolism; D-galactonate degradation; D-glyceraldehyde 3-phosphate and pyruvate from D-galactonate: step 1/3. Catalyzes the dehydration of D-galactonate to 2-keto-3-deoxy-D-galactonate. The sequence is that of D-galactonate dehydratase from Klebsiella pneumoniae (strain 342).